A 287-amino-acid chain; its full sequence is Prohibitin-1 (287 aa).

The interval 102-116 (VLQLPAIYQNLGLDY) is interaction with ATG8. The AIM signature appears at 109–112 (YQNL). A coiled-coil region spans residues 180-224 (EFTKAVEQKQIAQQDAERAKFLVEKAEQERQASVIRAEGEAESAE). The segment at 264–287 (SQHSGGGNSESSGSPNSLLLNIGR) is disordered. A compositionally biased stretch (low complexity) spans 272–287 (SESSGSPNSLLLNIGR).

It belongs to the prohibitin family. The mitochondrial prohibitin complex consists of two subunits (PHB1 and PHB2). The subunits assemble into a membrane-associated ring-shaped supercomplex of approximately 1 mDa. The mitochondrial prohibitin complex interacts with the m-AAA protease, a heterohexamer composed of YTA12/RCA1 and YTA10/AFG3. The mitochondrial prohibitin complex interacts with ATG8 and the interaction may support mitophagosome assembly. In terms of processing, the N-terminus is blocked.

The protein localises to the mitochondrion inner membrane. Functionally, prohibitin probably acts as a holdase/unfoldase for the stabilization of newly synthesized mitochondrial proteins. Involved in mitophagy; may act as an adapter for ATG8 that supports mitophagosome assembly. Negatively regulates the proteolytic processing of ATG32 via the i-AAA protease. Acts as a negative regulator of the m-AAA protease. The polypeptide is Prohibitin-1 (PHB1) (Saccharomyces cerevisiae (strain ATCC 204508 / S288c) (Baker's yeast)).